A 327-amino-acid chain; its full sequence is GTPase Obg (327 aa).

The Obg domain maps to 2 to 160 (HTFKDSLNIT…LDLRLELVLI (159 aa)). An OBG-type G domain is found at 161-326 (ADIGLVGLPN…LVNELFALSR (166 aa)). Residues 167-174 (GLPNAGKS), 192-196 (FTTKV), 213-216 (DVPG), 280-283 (NKLD), and 307-309 (SIY) each bind GTP. S174 and T194 together coordinate Mg(2+).

Belongs to the TRAFAC class OBG-HflX-like GTPase superfamily. OBG GTPase family. As to quaternary structure, monomer. It depends on Mg(2+) as a cofactor.

It is found in the cytoplasm. Its function is as follows. An essential GTPase which binds GTP, GDP and possibly (p)ppGpp with moderate affinity, with high nucleotide exchange rates and a fairly low GTP hydrolysis rate. Plays a role in control of the cell cycle, stress response, ribosome biogenesis and in those bacteria that undergo differentiation, in morphogenesis control. In Borrelia turicatae (strain 91E135), this protein is GTPase Obg.